The chain runs to 145 residues: Large ribosomal subunit protein uL16 (145 aa).

It belongs to the universal ribosomal protein uL16 family. Part of the 50S ribosomal subunit.

In terms of biological role, binds 23S rRNA and is also seen to make contacts with the A and possibly P site tRNAs. The polypeptide is Large ribosomal subunit protein uL16 (Lachnospira eligens (strain ATCC 27750 / DSM 3376 / VPI C15-48 / C15-B4) (Eubacterium eligens)).